The chain runs to 498 residues: Glycerol kinase (498 aa).

Residue T12 coordinates ADP. ATP-binding residues include T12, T13, and S14. Residue T12 participates in sn-glycerol 3-phosphate binding. Residue R16 participates in ADP binding. 4 residues coordinate sn-glycerol 3-phosphate: R82, E83, Y134, and D244. The glycerol site is built by R82, E83, Y134, D244, and Q245. 2 residues coordinate ADP: T266 and G309. ATP is bound by residues T266, G309, Q313, and G410. Residues G410 and N414 each coordinate ADP.

It belongs to the FGGY kinase family. As to quaternary structure, homotetramer and homodimer (in equilibrium).

The catalysed reaction is glycerol + ATP = sn-glycerol 3-phosphate + ADP + H(+). It functions in the pathway polyol metabolism; glycerol degradation via glycerol kinase pathway; sn-glycerol 3-phosphate from glycerol: step 1/1. Its activity is regulated as follows. Activated by phosphorylation and inhibited by fructose 1,6-bisphosphate (FBP). Key enzyme in the regulation of glycerol uptake and metabolism. Catalyzes the phosphorylation of glycerol to yield sn-glycerol 3-phosphate. This chain is Glycerol kinase, found in Natranaerobius thermophilus (strain ATCC BAA-1301 / DSM 18059 / JW/NM-WN-LF).